A 257-amino-acid chain; its full sequence is Diphthine synthase (257 aa).

Residues Leu9, Asp85, Val88, 113–114 (SI), Leu164, Ala207, and His232 contribute to the S-adenosyl-L-methionine site.

The protein belongs to the diphthine synthase family. As to quaternary structure, homodimer.

The enzyme catalyses 2-[(3S)-amino-3-carboxypropyl]-L-histidyl-[translation elongation factor 2] + 3 S-adenosyl-L-methionine = diphthine-[translation elongation factor 2] + 3 S-adenosyl-L-homocysteine + 3 H(+). The protein operates within protein modification; peptidyl-diphthamide biosynthesis. Functionally, S-adenosyl-L-methionine-dependent methyltransferase that catalyzes the trimethylation of the amino group of the modified target histidine residue in translation elongation factor 2 (EF-2), to form an intermediate called diphthine. The three successive methylation reactions represent the second step of diphthamide biosynthesis. In Methanococcus aeolicus (strain ATCC BAA-1280 / DSM 17508 / OCM 812 / Nankai-3), this protein is Diphthine synthase.